Here is an 89-residue protein sequence, read N- to C-terminus: Elongation factor 1-beta (89 aa).

This sequence belongs to the EF-1-beta/EF-1-delta family.

Functionally, promotes the exchange of GDP for GTP in EF-1-alpha/GDP, thus allowing the regeneration of EF-1-alpha/GTP that could then be used to form the ternary complex EF-1-alpha/GTP/AAtRNA. The chain is Elongation factor 1-beta from Methanosarcina barkeri (strain Fusaro / DSM 804).